The primary structure comprises 195 residues: Large ribosomal subunit protein bL27c (195 aa).

The N-terminal 60 residues, 1–60 (MASMAFTLVGAFKGMSLSSPCHSSSSASFLRADRVSLSVGGGVGMGVPMTMPVRRLTIQM), are a transit peptide targeting the chloroplast.

This sequence belongs to the bacterial ribosomal protein bL27 family. Part of the 50S ribosomal subunit.

It localises to the plastid. The protein localises to the chloroplast. In Oryza sativa subsp. japonica (Rice), this protein is Large ribosomal subunit protein bL27c (RPL27).